Reading from the N-terminus, the 275-residue chain is Phosphonoacetaldehyde hydrolase (275 aa).

D15 functions as the Nucleophile in the catalytic mechanism. Residues D15 and A17 each contribute to the Mg(2+) site. K56 serves as the catalytic Schiff-base intermediate with substrate. D189 provides a ligand contact to Mg(2+).

The protein belongs to the HAD-like hydrolase superfamily. PhnX family. In terms of assembly, homodimer. Requires Mg(2+) as cofactor.

It carries out the reaction phosphonoacetaldehyde + H2O = acetaldehyde + phosphate + H(+). Involved in phosphonate degradation. This chain is Phosphonoacetaldehyde hydrolase, found in Pseudomonas putida (strain W619).